We begin with the raw amino-acid sequence, 68 residues long: Large ribosomal subunit protein bL35 (68 aa).

It belongs to the bacterial ribosomal protein bL35 family.

The sequence is that of Large ribosomal subunit protein bL35 from Orientia tsutsugamushi (strain Boryong) (Rickettsia tsutsugamushi).